Reading from the N-terminus, the 605-residue chain is Beta-hexosaminidase ARB_07893 (605 aa).

The first 18 residues, 1-18, serve as a signal peptide directing secretion; sequence MLWIWVPGILGLFGRVEA. A glycan (N-linked (GlcNAc...) asparagine) is linked at N30. E293 functions as the Nucleophile in the catalytic mechanism. N342 is a glycosylation site (N-linked (GlcNAc...) asparagine). Catalysis depends on E374, which acts as the Proton donor. The N-linked (GlcNAc...) asparagine glycan is linked to N449.

It belongs to the glycosyl hydrolase 20 family.

Its subcellular location is the secreted. It carries out the reaction Hydrolysis of terminal non-reducing N-acetyl-D-hexosamine residues in N-acetyl-beta-D-hexosaminides.. In terms of biological role, beta-hexosaminidase that shows a broad substrate specificity. The chain is Beta-hexosaminidase ARB_07893 from Arthroderma benhamiae (strain ATCC MYA-4681 / CBS 112371) (Trichophyton mentagrophytes).